Here is a 220-residue protein sequence, read N- to C-terminus: Fructose-6-phosphate aldolase (220 aa).

The active-site Schiff-base intermediate with substrate is Lys-85.

This sequence belongs to the transaldolase family. Type 3A subfamily. In terms of assembly, homodecamer.

Its subcellular location is the cytoplasm. The catalysed reaction is beta-D-fructose 6-phosphate = dihydroxyacetone + D-glyceraldehyde 3-phosphate. Catalyzes the reversible formation of fructose 6-phosphate from dihydroxyacetone and D-glyceraldehyde 3-phosphate via an aldolization reaction. The chain is Fructose-6-phosphate aldolase from Salmonella schwarzengrund (strain CVM19633).